The sequence spans 312 residues: MKSDKPFLERYFYDPTLLQKGLIFALYPFSLIYQGIATLKRKTAKKHDFKIPIISIGNLIAGGSGKTPFILEIAPRYQEVAVVSRGYQRDSKGLVVVSVKGNILVSQKTAGDEAYLLALNLKQASVIVSEKRELGVLKALELGAKIVFLDDGFRFNFNQFNLLLKPKVPPYYPFCLPSGLYRESIKSYEEAHLVVTEDKDYQRITSISRPTKRMLLVTAIANPSRLDAFLPKEVVKKLYFKDHAPFNLELLEKEFYQNNATSLLVTSKDLVKLQDCNLPLSVLNLKLEICPKVLEEIDHYILSYPYNTKERL.

Residue 60-67 (IAGGSGKT) coordinates ATP.

The protein belongs to the LpxK family.

It carries out the reaction a lipid A disaccharide + ATP = a lipid IVA + ADP + H(+). It participates in glycolipid biosynthesis; lipid IV(A) biosynthesis; lipid IV(A) from (3R)-3-hydroxytetradecanoyl-[acyl-carrier-protein] and UDP-N-acetyl-alpha-D-glucosamine: step 6/6. Functionally, transfers the gamma-phosphate of ATP to the 4'-position of a tetraacyldisaccharide 1-phosphate intermediate (termed DS-1-P) to form tetraacyldisaccharide 1,4'-bis-phosphate (lipid IVA). This chain is Tetraacyldisaccharide 4'-kinase, found in Helicobacter pylori (strain ATCC 700392 / 26695) (Campylobacter pylori).